Reading from the N-terminus, the 93-residue chain is Large ribosomal subunit protein eL43 (93 aa).

The C4-type zinc-finger motif lies at 39 to 60; it reads CEFCGKYGVKRKAVGIWGCKDC.

It belongs to the eukaryotic ribosomal protein eL43 family.

This is Large ribosomal subunit protein eL43 (RPL37A) from Brassica rapa subsp. rapa (Turnip).